A 218-amino-acid polypeptide reads, in one-letter code: Adenylate kinase (218 aa).

ATP is bound at residue 10–15; sequence GAGKGT. The NMP stretch occupies residues 30–59; that stretch reads STGDMLRAAIQAQTPLGLEAKKVMDDGKLV. AMP-binding positions include T31, R36, 57 to 59, 85 to 88, and Q92; these read KLV and GFPR. Residues 122–159 are LID; it reads GRRVHLASGRTYHVIFNPPKKEGVDDITGEPLIQREDD. Residues R123 and 132–133 each bind ATP; that span reads TY. AMP-binding residues include R156 and R167. G203 contributes to the ATP binding site.

The protein belongs to the adenylate kinase family. Monomer.

The protein resides in the cytoplasm. The enzyme catalyses AMP + ATP = 2 ADP. It participates in purine metabolism; AMP biosynthesis via salvage pathway; AMP from ADP: step 1/1. Functionally, catalyzes the reversible transfer of the terminal phosphate group between ATP and AMP. Plays an important role in cellular energy homeostasis and in adenine nucleotide metabolism. This is Adenylate kinase from Prosthecochloris aestuarii (strain DSM 271 / SK 413).